A 192-amino-acid chain; its full sequence is MTPSATKPLVSEAPKGIIDPSTGRPILSDDPFYKEINAELADKGFLVTTVDDLITWARTGSLMWMTFGLACCAVEMMQVSMPRYDVERFGFAPRASPRQSDVMIVAGTLTNKMAPALRKVYDQMPEPRYVISMGSCANGGGYYHYSYAVVRGCDRVVPVDIYVPGCPPTAEALLYGVLLLQRKIRRTGTIER.

[4Fe-4S] cluster contacts are provided by Cys-71, Cys-72, Cys-136, and Cys-166.

This sequence belongs to the complex I 20 kDa subunit family. As to quaternary structure, NDH-1 is composed of 14 different subunits. Subunits NuoB, C, D, E, F, and G constitute the peripheral sector of the complex. [4Fe-4S] cluster serves as cofactor.

The protein localises to the cell inner membrane. The enzyme catalyses a quinone + NADH + 5 H(+)(in) = a quinol + NAD(+) + 4 H(+)(out). NDH-1 shuttles electrons from NADH, via FMN and iron-sulfur (Fe-S) centers, to quinones in the respiratory chain. Couples the redox reaction to proton translocation (for every two electrons transferred, four hydrogen ions are translocated across the cytoplasmic membrane), and thus conserves the redox energy in a proton gradient. This Azorhizobium caulinodans (strain ATCC 43989 / DSM 5975 / JCM 20966 / LMG 6465 / NBRC 14845 / NCIMB 13405 / ORS 571) protein is NADH-quinone oxidoreductase subunit B.